The primary structure comprises 339 residues: Ketol-acid reductoisomerase (NADP(+)) (339 aa).

Positions 1–182 (MRVYYDRDAD…GGGRSGVIET (182 aa)) constitute a KARI N-terminal Rossmann domain. NADP(+)-binding positions include 24–27 (YGSQ), R48, S51, T53, and 83–86 (DELQ). Residue H108 is part of the active site. G134 contacts NADP(+). The KARI C-terminal knotted domain occupies 183 to 328 (TFKEECETDL…GKLRAMMPWI (146 aa)). 4 residues coordinate Mg(2+): D191, E195, E227, and E231. Substrate is bound at residue S252.

Belongs to the ketol-acid reductoisomerase family. It depends on Mg(2+) as a cofactor.

The enzyme catalyses (2R)-2,3-dihydroxy-3-methylbutanoate + NADP(+) = (2S)-2-acetolactate + NADPH + H(+). It catalyses the reaction (2R,3R)-2,3-dihydroxy-3-methylpentanoate + NADP(+) = (S)-2-ethyl-2-hydroxy-3-oxobutanoate + NADPH + H(+). The protein operates within amino-acid biosynthesis; L-isoleucine biosynthesis; L-isoleucine from 2-oxobutanoate: step 2/4. Its pathway is amino-acid biosynthesis; L-valine biosynthesis; L-valine from pyruvate: step 2/4. In terms of biological role, involved in the biosynthesis of branched-chain amino acids (BCAA). Catalyzes an alkyl-migration followed by a ketol-acid reduction of (S)-2-acetolactate (S2AL) to yield (R)-2,3-dihydroxy-isovalerate. In the isomerase reaction, S2AL is rearranged via a Mg-dependent methyl migration to produce 3-hydroxy-3-methyl-2-ketobutyrate (HMKB). In the reductase reaction, this 2-ketoacid undergoes a metal-dependent reduction by NADPH to yield (R)-2,3-dihydroxy-isovalerate. The chain is Ketol-acid reductoisomerase (NADP(+)) from Brucella abortus (strain S19).